We begin with the raw amino-acid sequence, 476 residues long: UDP-N-acetylmuramate--L-alanine ligase (476 aa).

ATP is bound at residue 121–127; that stretch reads GAHGKTT.

This sequence belongs to the MurCDEF family.

Its subcellular location is the cytoplasm. The catalysed reaction is UDP-N-acetyl-alpha-D-muramate + L-alanine + ATP = UDP-N-acetyl-alpha-D-muramoyl-L-alanine + ADP + phosphate + H(+). The protein operates within cell wall biogenesis; peptidoglycan biosynthesis. In terms of biological role, cell wall formation. The sequence is that of UDP-N-acetylmuramate--L-alanine ligase from Clavibacter michiganensis subsp. michiganensis (strain NCPPB 382).